The primary structure comprises 435 residues: Actin-like protein 7A (435 aa).

A disordered region spans residues 1–64 (MWAPPAAIMG…TESKAAKERP (64 aa)). Over residues 20-31 (QAPLQTQALQTA) the composition is skewed to low complexity. A required for interaction with TES region spans residues 31-51 (ASLRDGPAKRAVWVRHTSSEP). The span at 55-64 (TESKAAKERP) shows a compositional bias: basic and acidic residues.

Belongs to the actin family. Interacts (via N-terminus) with TES (via LIM domain 2). Heterodimer with TES; the heterodimer interacts with ENAH to form a heterotrimer. Interacts with ACTL9. Interacts with CYLC1; the interaction may be relevant for proper acrosome attachment to the nuclear envelope. As to expression, strongly expressed in testis. Also expressed in other tissues.

Its subcellular location is the cytoplasm. It is found in the cytoskeleton. The protein resides in the golgi apparatus. The protein localises to the nucleus. It localises to the cytoplasmic vesicle. Its subcellular location is the secretory vesicle. It is found in the acrosome. In terms of biological role, essential for normal spermatogenesis and male fertility. Required for normal sperm head morphology, acroplaxome formation, acrosome attachment, and acrosome granule stability. May anchor and stabilize acrosomal adherence to the acroplaxome at least in part by facilitating the presence of F-actin in the subacrosomal space. May play an important role in formation and fusion of Golgi-derived vesicles during acrosome biogenesis. The chain is Actin-like protein 7A (ACTL7A) from Homo sapiens (Human).